The following is a 1104-amino-acid chain: Collagenase ColA (1104 aa).

The first 39 residues, 1 to 39 (MKKNLKRGELTKLKLVERWSATFTLAAFILFNSSFKVLA), serve as a signal peptide directing secretion. Residues 40–86 (ADKKVENSNNGQITREINADQISKTELNNEVATDNNRPLGPSIAPSR) constitute a propeptide that is removed on maturation. An S1 metalloprotease domain region spans residues 87–761 (ARNNKIYTFD…YVYDVVFHGM (675 aa)). The tract at residues 93-367 (YTFDELNRMN…AANDLDLNFG (275 aa)) is activator domain. Residues 377 to 646 (DFNKIKADAR…MDSLLNNIDN (270 aa)) form a catalytic subdomain region. E477 contacts Ca(2+). Zn(2+) is bound at residue H502. Residue E503 is part of the active site. Position 506 (H506) interacts with Zn(2+). 3 residues coordinate Ca(2+): G510, V514, and G516. E534 lines the Zn(2+) pocket. The tract at residues 654 to 767 (DEYVNGHEAK…FHGMNTDTNT (114 aa)) is helper subdomain. Positions 762-860 (NTDTNTDVHV…KKIKVVEDKP (99 aa)) are S2 domain. N772, K773, D800, D802, D841, E866, E868, N870, D894, D897, E993, E995, N997, L1016, D1020, K1022, and D1023 together coordinate Ca(2+). A PKD domain is found at 774–862 (EPKAVIKSDS…IKVVEDKPVE (89 aa)). The tract at residues 865 to 979 (NESEPNNDFE…TYTVNVKGNL (115 aa)) is S3a collagen-binding domain. Residues 992-1104 (KEVENNNDFD…GNYIVNLQNK (113 aa)) are S3b collagen-binding domain.

It belongs to the peptidase M9B family. Collagenase subfamily. It depends on Ca(2+) as a cofactor. Requires Zn(2+) as cofactor.

The protein resides in the secreted. The enzyme catalyses Digestion of native collagen in the triple helical region at Xaa-|-Gly bonds. With synthetic peptides, a preference is shown for Gly at P3 and P1', Pro and Ala at P2 and P2', and hydroxyproline, Ala or Arg at P3'.. Functionally, clostridial collagenases are among the most efficient degraders of eukaryotic collagen known; saprophytes use collagen as a carbon source while pathogens additionally digest collagen to aid in host colonization. Has both tripeptidylcarboxypeptidase on Gly-X-Y and endopeptidase activities; the endopeptidase cuts within the triple helix region of collagen while tripeptidylcarboxypeptidase successively digests the exposed ends, thus clostridial collagenases can digest large sections of collagen. The sequence is that of Collagenase ColA (colA) from Clostridium perfringens (strain 13 / Type A).